Here is a 355-residue protein sequence, read N- to C-terminus: Histidine biosynthesis bifunctional protein HisB (355 aa).

The tract at residues 1-166 (MKQKILFIDR…DITKEIIKRN (166 aa)) is histidinol-phosphatase. The active-site Nucleophile is Asp-9. 2 residues coordinate Mg(2+): Asp-9 and Asp-11. The active-site Proton donor is Asp-11. Zn(2+) is bound by residues Cys-93, His-95, Cys-101, and Cys-103. Position 130 (Asp-130) interacts with Mg(2+). The tract at residues 167–355 (RYREVIRETK…NTLPTSKGIL (189 aa)) is imidazoleglycerol-phosphate dehydratase.

In the N-terminal section; belongs to the histidinol-phosphatase family. The protein in the C-terminal section; belongs to the imidazoleglycerol-phosphate dehydratase family. The cofactor is Mg(2+). Zn(2+) serves as cofactor.

It localises to the cytoplasm. It catalyses the reaction D-erythro-1-(imidazol-4-yl)glycerol 3-phosphate = 3-(imidazol-4-yl)-2-oxopropyl phosphate + H2O. The catalysed reaction is L-histidinol phosphate + H2O = L-histidinol + phosphate. It participates in amino-acid biosynthesis; L-histidine biosynthesis; L-histidine from 5-phospho-alpha-D-ribose 1-diphosphate: step 6/9. It functions in the pathway amino-acid biosynthesis; L-histidine biosynthesis; L-histidine from 5-phospho-alpha-D-ribose 1-diphosphate: step 8/9. This Buchnera aphidicola subsp. Schizaphis graminum (strain Sg) protein is Histidine biosynthesis bifunctional protein HisB.